The following is a 132-amino-acid chain: Small ribosomal subunit protein uS8 (132 aa).

Belongs to the universal ribosomal protein uS8 family. As to quaternary structure, part of the 30S ribosomal subunit. Contacts proteins S5 and S12.

Functionally, one of the primary rRNA binding proteins, it binds directly to 16S rRNA central domain where it helps coordinate assembly of the platform of the 30S subunit. This is Small ribosomal subunit protein uS8 from Syntrophotalea carbinolica (strain DSM 2380 / NBRC 103641 / GraBd1) (Pelobacter carbinolicus).